The primary structure comprises 358 residues: Methionine import ATP-binding protein MetN (358 aa).

Residues 14–255 (VVFDAVSKRF…SRHETTRALL (242 aa)) form the ABC transporter domain. 52-59 (GRSGAGKS) provides a ligand contact to ATP.

Belongs to the ABC transporter superfamily. Methionine importer (TC 3.A.1.24) family. In terms of assembly, the complex is composed of two ATP-binding proteins (MetN), two transmembrane proteins (MetI) and a solute-binding protein (MetQ).

It localises to the cell inner membrane. The catalysed reaction is L-methionine(out) + ATP + H2O = L-methionine(in) + ADP + phosphate + H(+). The enzyme catalyses D-methionine(out) + ATP + H2O = D-methionine(in) + ADP + phosphate + H(+). Functionally, part of the ABC transporter complex MetNIQ involved in methionine import. Responsible for energy coupling to the transport system. This chain is Methionine import ATP-binding protein MetN, found in Rhizobium meliloti (strain 1021) (Ensifer meliloti).